Here is a 338-residue protein sequence, read N- to C-terminus: Very-long-chain 3-oxoacyl-CoA reductase (338 aa).

The chain crosses the membrane as a helical span at residues leucine 20–leucine 40. Residues valine 66, asparagine 95, aspartate 120, asparagine 147, tyrosine 214, lysine 218, valine 247, and serine 249 each contribute to the NADP(+) site. Catalysis depends on tyrosine 214, which acts as the Proton donor. Lysine 218 acts as the Lowers pKa of active site Tyr in catalysis.

Belongs to the short-chain dehydrogenases/reductases (SDR) family.

Its subcellular location is the endoplasmic reticulum membrane. It catalyses the reaction a very-long-chain (3R)-3-hydroxyacyl-CoA + NADP(+) = a very-long-chain 3-oxoacyl-CoA + NADPH + H(+). Its pathway is lipid metabolism; fatty acid biosynthesis. Its function is as follows. Component of the microsomal membrane bound fatty acid elongation system, which produces the 26-carbon very long-chain fatty acids (VLCFA) from palmitate. Catalyzes the reduction of the 3-ketoacyl-CoA intermediate that is formed in each cycle of fatty acid elongation. VLCFAs serve as precursors for ceramide and sphingolipids. The polypeptide is Very-long-chain 3-oxoacyl-CoA reductase (Laccaria bicolor (strain S238N-H82 / ATCC MYA-4686) (Bicoloured deceiver)).